The following is a 262-amino-acid chain: Small ribosomal subunit protein mS23 (262 aa).

Positions 211-262 are disordered; sequence SGQSDEAPEGEGSDMSAGEYDMAVEELAGQGSIPNTPQSTVVPEGTSAPAHA. Polar residues predominate over residues 242 to 251; the sequence is SIPNTPQSTV.

The protein belongs to the mitochondrion-specific ribosomal protein mS23 family. Component of the mitochondrial small ribosomal subunit.

It is found in the mitochondrion. This chain is Small ribosomal subunit protein mS23 (RSM25), found in Phaeosphaeria nodorum (strain SN15 / ATCC MYA-4574 / FGSC 10173) (Glume blotch fungus).